Reading from the N-terminus, the 171-residue chain is AN1-type zinc finger protein 2A (171 aa).

2 AN1-type zinc fingers span residues 4 to 52 (PDLG…KKDV) and 94 to 142 (KVFT…SSAS). The Zn(2+) site is built by Cys10, Cys15, Cys25, Cys28, Cys33, His36, His42, Cys44, Cys100, Cys105, Cys115, Cys118, Cys123, His126, His132, and Cys134. The tract at residues 134 to 171 (CQAGSSSASRGRTSTSRAAEQKPSGVSWLAQRLRRTVK) is disordered. Positions 136-151 (AGSSSASRGRTSTSRA) are enriched in low complexity.

The protein localises to the cytoplasm. Its subcellular location is the nucleus. This Mus musculus (Mouse) protein is AN1-type zinc finger protein 2A (Zfand2a).